The chain runs to 394 residues: Dual specificity protein phosphatase 4 (394 aa).

An N-acetylvaline modification is found at V2. Residues 41–159 (SGGKCLLLDC…FSSEYPEFCS (119 aa)) form the Rhodanese domain. The 142-residue stretch at 195–336 (GPVEILPFLY…LLQFESQVLA (142 aa)) folds into the Tyrosine-protein phosphatase domain. C280 acts as the Phosphocysteine intermediate in catalysis. Phosphoserine; by MAPK is present on residues S386 and S391.

Belongs to the protein-tyrosine phosphatase family. Non-receptor class dual specificity subfamily. Hollow spherical complex composed of 24 subunits with pseudooctahedral symmetry, has a tetramer as the basic unit. Phosphorylation in the C-terminus by ERK1/2 inhibits proteasomal degradation and stabilizes the protein.

It is found in the nucleus. It catalyses the reaction O-phospho-L-tyrosyl-[protein] + H2O = L-tyrosyl-[protein] + phosphate. The enzyme catalyses O-phospho-L-seryl-[protein] + H2O = L-seryl-[protein] + phosphate. The catalysed reaction is O-phospho-L-threonyl-[protein] + H2O = L-threonyl-[protein] + phosphate. Functionally, regulates mitogenic signal transduction by dephosphorylating both Thr and Tyr residues on MAP kinases ERK1 and ERK2. This is Dual specificity protein phosphatase 4 (DUSP4) from Homo sapiens (Human).